The chain runs to 161 residues: Putative pre-16S rRNA nuclease (161 aa).

It belongs to the YqgF nuclease family.

It is found in the cytoplasm. In terms of biological role, could be a nuclease involved in processing of the 5'-end of pre-16S rRNA. The sequence is that of Putative pre-16S rRNA nuclease from Bartonella bacilliformis (strain ATCC 35685 / KC583 / Herrer 020/F12,63).